The following is a 256-amino-acid chain: UPF0280 protein MTH_727 (256 aa).

The protein belongs to the UPF0280 family.

This is UPF0280 protein MTH_727 from Methanothermobacter thermautotrophicus (strain ATCC 29096 / DSM 1053 / JCM 10044 / NBRC 100330 / Delta H) (Methanobacterium thermoautotrophicum).